A 501-amino-acid polypeptide reads, in one-letter code: Glutamate--tRNA ligase (501 aa).

A 'HIGH' region motif is present at residues 11–21 (PSPTGFLHIGN). The 'KMSKS' region motif lies at 257-261 (KLSKR). Lys-260 is an ATP binding site.

Belongs to the class-I aminoacyl-tRNA synthetase family. Glutamate--tRNA ligase type 1 subfamily. In terms of assembly, monomer.

It is found in the cytoplasm. It carries out the reaction tRNA(Glu) + L-glutamate + ATP = L-glutamyl-tRNA(Glu) + AMP + diphosphate. Catalyzes the attachment of glutamate to tRNA(Glu) in a two-step reaction: glutamate is first activated by ATP to form Glu-AMP and then transferred to the acceptor end of tRNA(Glu). This Limosilactobacillus reuteri subsp. reuteri (strain JCM 1112) (Lactobacillus reuteri) protein is Glutamate--tRNA ligase.